A 256-amino-acid chain; its full sequence is Undecaprenyl-diphosphatase 2 (256 aa).

8 helical membrane passes run 1–21, 38–58, 70–90, 97–117, 134–154, 175–195, 208–228, and 236–256; these read MDIFNAIILGIIEGITEFLPI, ATATNQAFGVIIQLAAILAVL, LNLWIKVAIAFIPLGIIAFIF, LFNVPVVGVMFIVGGVIFLLL, VTYKQAIWIGIAQVFALIPGT, AEFSFLLGLPVLAAASGYDLL, ALAVGFVTSFIVAYFTIKLFI, and FVSFGIYRIVFGVILLTIAYV.

Belongs to the UppP family.

Its subcellular location is the cell inner membrane. It carries out the reaction di-trans,octa-cis-undecaprenyl diphosphate + H2O = di-trans,octa-cis-undecaprenyl phosphate + phosphate + H(+). Its function is as follows. Catalyzes the dephosphorylation of undecaprenyl diphosphate (UPP). Confers resistance to bacitracin. The polypeptide is Undecaprenyl-diphosphatase 2 (Pseudoalteromonas translucida (strain TAC 125)).